The sequence spans 180 residues: GTP cyclohydrolase 1 (180 aa).

Positions 71, 74, and 142 each coordinate Zn(2+).

The protein belongs to the GTP cyclohydrolase I family. As to quaternary structure, toroid-shaped homodecamer, composed of two pentamers of five dimers.

It catalyses the reaction GTP + H2O = 7,8-dihydroneopterin 3'-triphosphate + formate + H(+). Its pathway is cofactor biosynthesis; 7,8-dihydroneopterin triphosphate biosynthesis; 7,8-dihydroneopterin triphosphate from GTP: step 1/1. The sequence is that of GTP cyclohydrolase 1 (folE) from Helicobacter pylori (strain J99 / ATCC 700824) (Campylobacter pylori J99).